The chain runs to 399 residues: Enoyl-[acyl-carrier-protein] reductase [NADH] (399 aa).

Residues 48–53, 74–75, 111–112, and 139–140 contribute to the NAD(+) site; these read GASTGY, FE, DA, and LA. Tyr225 lines the substrate pocket. The active-site Proton donor is Tyr235. NAD(+) contacts are provided by residues Lys244 and 274–276; that span reads VVT.

The protein belongs to the TER reductase family. Monomer.

The catalysed reaction is a 2,3-saturated acyl-[ACP] + NAD(+) = a (2E)-enoyl-[ACP] + NADH + H(+). It functions in the pathway lipid metabolism; fatty acid biosynthesis. Functionally, involved in the final reduction of the elongation cycle of fatty acid synthesis (FAS II). Catalyzes the reduction of a carbon-carbon double bond in an enoyl moiety that is covalently linked to an acyl carrier protein (ACP). In Yersinia pseudotuberculosis serotype O:1b (strain IP 31758), this protein is Enoyl-[acyl-carrier-protein] reductase [NADH].